Here is a 411-residue protein sequence, read N- to C-terminus: Elongation factor 1-gamma (411 aa).

One can recognise a GST N-terminal domain in the interval 3–84 (LTLWSGVNPE…HIARLDRSGG (82 aa)). Residues 90-216 (TPLEGSQVDM…QGATFGAREG (127 aa)) form the GST C-terminal domain. The disordered stretch occupies residues 212 to 265 (GAREGGAKGQGRGCARPGREEAERAAAAADGAEEEDEAPREKKKPNPLDELPPS). Positions 214–223 (REGGAKGQGR) are enriched in gly residues. The region spanning 255–411 (KPNPLDELPP…RPVLEGRVFK (157 aa)) is the EF-1-gamma C-terminal domain.

As to quaternary structure, EF-1 is composed of four subunits: alpha, beta, delta, and gamma.

In terms of biological role, probably plays a role in anchoring the complex to other cellular components. The polypeptide is Elongation factor 1-gamma (Trypanosoma cruzi).